The primary structure comprises 208 residues: Methylthioribulose-1-phosphate dehydratase (208 aa).

His101 and His103 together coordinate Zn(2+).

This sequence belongs to the aldolase class II family. MtnB subfamily. It depends on Zn(2+) as a cofactor.

It carries out the reaction 5-(methylsulfanyl)-D-ribulose 1-phosphate = 5-methylsulfanyl-2,3-dioxopentyl phosphate + H2O. It functions in the pathway amino-acid biosynthesis; L-methionine biosynthesis via salvage pathway; L-methionine from S-methyl-5-thio-alpha-D-ribose 1-phosphate: step 2/6. In terms of biological role, catalyzes the dehydration of methylthioribulose-1-phosphate (MTRu-1-P) into 2,3-diketo-5-methylthiopentyl-1-phosphate (DK-MTP-1-P). This Gluconobacter oxydans (strain 621H) (Gluconobacter suboxydans) protein is Methylthioribulose-1-phosphate dehydratase.